Here is a 223-residue protein sequence, read N- to C-terminus: Deoxyribose-phosphate aldolase (223 aa).

Residue aspartate 91 is the Proton donor/acceptor of the active site. Catalysis depends on lysine 154, which acts as the Schiff-base intermediate with acetaldehyde. The active-site Proton donor/acceptor is the lysine 183.

Belongs to the DeoC/FbaB aldolase family. DeoC type 1 subfamily.

It is found in the cytoplasm. It carries out the reaction 2-deoxy-D-ribose 5-phosphate = D-glyceraldehyde 3-phosphate + acetaldehyde. The protein operates within carbohydrate degradation; 2-deoxy-D-ribose 1-phosphate degradation; D-glyceraldehyde 3-phosphate and acetaldehyde from 2-deoxy-alpha-D-ribose 1-phosphate: step 2/2. Functionally, catalyzes a reversible aldol reaction between acetaldehyde and D-glyceraldehyde 3-phosphate to generate 2-deoxy-D-ribose 5-phosphate. This is Deoxyribose-phosphate aldolase from Lysinibacillus sphaericus (strain C3-41).